The primary structure comprises 239 residues: Sugar fermentation stimulation protein homolog (239 aa).

Belongs to the SfsA family.

The polypeptide is Sugar fermentation stimulation protein homolog (Cyanothece sp. (strain PCC 7425 / ATCC 29141)).